A 553-amino-acid polypeptide reads, in one-letter code: Zinc finger protein with KRAB and SCAN domains 3 (553 aa).

Residues 28 to 49 are disordered; that stretch reads EQEESSPLAEETSWLGSPGPDR. Phosphoserine occurs at positions 33 and 44. Positions 51–133 constitute an SCAN box domain; sequence RQRFRAFRYP…ALLEYLDRQL (83 aa). A Phosphothreonine modification is found at threonine 136. Lysine 176 is covalently cross-linked (Glycyl lysine isopeptide (Lys-Gly) (interchain with G-Cter in SUMO2)). Threonine 206 is modified (phosphothreonine). Residues 213–273 form the KRAB domain; it reads LKMEDVAPVL…RAEEYRDQKP (61 aa). Serine 223 carries the post-translational modification Phosphoserine. C2H2-type zinc fingers lie at residues 313–335, 341–363, 369–391, 397–419, and 425–447; these read FYCR…KRIH, YECE…QRVH, YECE…QRTH, YECD…HRIH, and YQCN…QRTH. Threonine 448 carries the post-translational modification Phosphothreonine. 2 consecutive C2H2-type zinc fingers follow at residues 479-501 and 507-529; these read YQCN…QKVH and FECQ…QRRH.

Belongs to the krueppel C2H2-type zinc-finger protein family. In terms of tissue distribution, expressed in heart, brain, spleen, lung, liver, skeletal muscle, kidney and testis.

The protein resides in the nucleus. It localises to the cytoplasm. In terms of biological role, transcriptional factor that binds to the consensus sequence 5'-[GT][AG][AGT]GGGG-3' and acts as a repressor of autophagy. Specifically represses expression of genes involved in autophagy and lysosome biogenesis/function such as MAP1LC3B, ULK1 or WIPI2. Associates with chromatin at the ITGB4 and VEGF promoters. In Mus musculus (Mouse), this protein is Zinc finger protein with KRAB and SCAN domains 3 (Zkscan3).